Here is a 983-residue protein sequence, read N- to C-terminus: Protein CLASP-3 (983 aa).

Disordered regions lie at residues 356 to 393 (YPNRPGSRTRTSSITSTDSRDTSPTRRNSPLPPETQKA) and 666 to 690 (SNNIATNSGATASRETSNTSFQKES). Over residues 359–372 (RPGSRTRTSSITST) the composition is skewed to low complexity. The stretch at 918–956 (ITPTIIKAYQSTSSTVRKTVVYCLVAMVNRVGEQRMTPH) is one HEAT repeat.

The protein belongs to the CLASP family.

It localises to the cytoplasm. It is found in the cytoskeleton. Functionally, microtubule plus-end tracking protein that promotes the stabilization of dynamic microtubules. The sequence is that of Protein CLASP-3 (cls-3) from Caenorhabditis elegans.